Consider the following 644-residue polypeptide: ATP-dependent zinc metalloprotease FtsH (644 aa).

The Cytoplasmic portion of the chain corresponds to 1–13 (MANNDNKHRRSMS). A helical membrane pass occupies residues 14–34 (MLLYIAVAIFVYLLLSNTLLP). Residues 35–117 (GLLRQQIQTV…SIPDNSANML (83 aa)) lie on the Extracellular side of the membrane. The helical transmembrane segment at 118-138 (MYALIQYGIPLIIFLGIGFFI) threads the bilayer. The Cytoplasmic segment spans residues 139-644 (NRSLKRAMGD…DEGSSTPSEE (506 aa)). 224 to 231 (GPPGTGKT) contacts ATP. His-445 is a binding site for Zn(2+). Glu-446 is a catalytic residue. Zn(2+) contacts are provided by His-449 and Asp-522.

The protein in the central section; belongs to the AAA ATPase family. This sequence in the C-terminal section; belongs to the peptidase M41 family. As to quaternary structure, homohexamer. It depends on Zn(2+) as a cofactor.

It localises to the cell membrane. In terms of biological role, acts as a processive, ATP-dependent zinc metallopeptidase for both cytoplasmic and membrane proteins. Plays a role in the quality control of integral membrane proteins. This chain is ATP-dependent zinc metalloprotease FtsH, found in Lancefieldella parvula (strain ATCC 33793 / DSM 20469 / CCUG 32760 / JCM 10300 / KCTC 3663 / VPI 0546 / 1246) (Atopobium parvulum).